Consider the following 1432-residue polypeptide: Gag-Pol polyprotein (1432 aa).

Residue Gly2 is the site of N-myristoyl glycine; by host attachment. Residues 7–31 (ILSGGKLDDWEKIRLRPGGKKKYRI) form an interaction with Gp41 region. Residues 8–43 (LSGGKLDDWEKIRLRPGGKKKYRIKHLVWASRELDR) are interaction with host CALM1. Positions 12-19 (KLDDWEKI) are interaction with host AP3D1. The interval 14–33 (DDWEKIRLRPGGKKKYRIKH) is interaction with membrane phosphatidylinositol 4,5-bisphosphate and RNA. A Nuclear export signal motif is present at residues 16 to 22 (WEKIRLR). The short motif at 26–32 (KKKYRIK) is the Nuclear localization signal element. The interaction with membrane phosphatidylinositol 4,5-bisphosphate stretch occupies residues 73-77 (QEIKS). The residue at position 132 (Tyr132) is a Phosphotyrosine; by host. Positions 189 to 227 (NTIGGHQAAMQMLKDTINEEAAEWDRVHPVHAGPIAPGQ) are interaction with human PPIA/CYPA and NUP153. A dimerization/Multimerization of capsid protein p24 region spans residues 277–363 (YSPVSILDIR…GGPGHKARVL (87 aa)). 2 CCHC-type zinc fingers span residues 389 to 406 (VKCF…NCRA) and 410 to 427 (KGCW…DCTE). Residues 443-483 (EARELSPEQTRANSPTSREPRARRGDPLPETGAEGQGTVSS) form a disordered region. Residues 449–459 (PEQTRANSPTS) show a composition bias toward polar residues. Residues 460-469 (REPRARRGDP) show a composition bias toward basic and acidic residues. The dimerization of protease stretch occupies residues 486 to 490 (PQITL). The 70-residue stretch at 505–574 (REALLDTGAD…TPVNIIGRNM (70 aa)) folds into the Peptidase A2 domain. The active-site For protease activity; shared with dimeric partner is Asp510. Dimerization of protease regions lie at residues 534–540 (GIGGFIK) and 573–585 (NMLT…LNFP). Residues 628-818 (EGKISRVGPE…PPFLWMGYEL (191 aa)) form the Reverse transcriptase domain. Mg(2+) is bound by residues Asp694, Asp769, and Asp770. The RT 'primer grip' stretch occupies residues 811-819 (FLWMGYELH). The Tryptophan repeat motif motif lies at 982–998 (WETWWTDYWQATWIPEW). An RNase H type-1 domain is found at 1018–1141 (IMGAETFYVD…VDKLVSSGIR (124 aa)). Residues Asp1027, Glu1062, Asp1082, and Asp1133 each contribute to the Mg(2+) site. Residues 1147-1188 (DGIDKAQEDHEKYHSNWRAMASDFNLPPVVAKEIVASCDKCQ) form an Integrase-type zinc finger. Zn(2+) contacts are provided by His1156, His1160, Cys1184, and Cys1187. The Integrase catalytic domain maps to 1198–1348 (VDCSPGIWQL…SAGERIIDII (151 aa)). Positions 1208, 1260, and 1296 each coordinate Mg(2+). Residues 1367–1414 (FRVYYRDSRDPIWKGPAKLPWKGEGAVVIQDNSEIKVVPRRKAKIIRD) constitute a DNA-binding region (integrase-type).

Homotrimer; further assembles as hexamers of trimers. Interacts with gp41 (via C-terminus). Interacts with host CALM1; this interaction induces a conformational change in the Matrix protein, triggering exposure of the myristate group. Interacts with host AP3D1; this interaction allows the polyprotein trafficking to multivesicular bodies during virus assembly. Part of the pre-integration complex (PIC) which is composed of viral genome, matrix protein, Vpr and integrase. As to quaternary structure, homodimer; the homodimer further multimerizes as homohexamers or homopentamers. Interacts with human PPIA/CYPA; This interaction stabilizes the capsid. Interacts with human NUP153. Interacts with host PDZD8; this interaction stabilizes the capsid. Interacts with monkey TRIM5; this interaction destabilizes the capsid. In terms of assembly, homodimer, whose active site consists of two apposed aspartic acid residues. Heterodimer of p66 RT and p51 RT (RT p66/p51). Heterodimerization of RT is essential for DNA polymerase activity. The overall folding of the subdomains is similar in p66 RT and p51 RT but the spatial arrangements of the subdomains are dramatically different. As to quaternary structure, homotetramer; may further associate as a homohexadecamer. Part of the pre-integration complex (PIC) which is composed of viral genome, matrix protein, Vpr and integrase. Interacts with human SMARCB1/INI1 and human PSIP1/LEDGF isoform 1. Interacts with human KPNA3; this interaction might play a role in nuclear import of the pre-integration complex. Interacts with human NUP153; this interaction might play a role in nuclear import of the pre-integration complex. Mg(2+) serves as cofactor. In terms of processing, specific enzymatic cleavages by the viral protease yield mature proteins. The protease is released by autocatalytic cleavage. The polyprotein is cleaved during and after budding, this process is termed maturation. Proteolytic cleavage of p66 RT removes the RNase H domain to yield the p51 RT subunit. Nucleocapsid protein p7 might be further cleaved after virus entry. Tyrosine phosphorylated presumably in the virion by a host kinase. Phosphorylation is apparently not a major regulator of membrane association. Post-translationally, phosphorylated possibly by host MAPK1; this phosphorylation is necessary for Pin1-mediated virion uncoating. In terms of processing, methylated by host PRMT6, impairing its function by reducing RNA annealing and the initiation of reverse transcription.

It localises to the host cell membrane. Its subcellular location is the host endosome. The protein resides in the host multivesicular body. It is found in the virion membrane. The protein localises to the host nucleus. It localises to the host cytoplasm. Its subcellular location is the virion. It carries out the reaction Specific for a P1 residue that is hydrophobic, and P1' variable, but often Pro.. The catalysed reaction is Endohydrolysis of RNA in RNA/DNA hybrids. Three different cleavage modes: 1. sequence-specific internal cleavage of RNA. Human immunodeficiency virus type 1 and Moloney murine leukemia virus enzymes prefer to cleave the RNA strand one nucleotide away from the RNA-DNA junction. 2. RNA 5'-end directed cleavage 13-19 nucleotides from the RNA end. 3. DNA 3'-end directed cleavage 15-20 nucleotides away from the primer terminus.. It catalyses the reaction 3'-end directed exonucleolytic cleavage of viral RNA-DNA hybrid.. The enzyme catalyses DNA(n) + a 2'-deoxyribonucleoside 5'-triphosphate = DNA(n+1) + diphosphate. Protease: The viral protease is inhibited by many synthetic protease inhibitors (PIs), such as amprenavir, atazanavir, indinavir, loprinavir, nelfinavir, ritonavir and saquinavir. Use of protease inhibitors in tritherapy regimens permit more ambitious therapeutic strategies. Reverse transcriptase/ribonuclease H: RT can be inhibited either by nucleoside RT inhibitors (NRTIs) or by non nucleoside RT inhibitors (NNRTIs). NRTIs act as chain terminators, whereas NNRTIs inhibit DNA polymerization by binding a small hydrophobic pocket near the RT active site and inducing an allosteric change in this region. Classical NRTIs are abacavir, adefovir (PMEA), didanosine (ddI), lamivudine (3TC), stavudine (d4T), tenofovir (PMPA), zalcitabine (ddC), and zidovudine (AZT). Classical NNRTIs are atevirdine (BHAP U-87201E), delavirdine, efavirenz (DMP-266), emivirine (I-EBU), and nevirapine (BI-RG-587). The tritherapies used as a basic effective treatment of AIDS associate two NRTIs and one NNRTI. Mediates, with Gag polyprotein, the essential events in virion assembly, including binding the plasma membrane, making the protein-protein interactions necessary to create spherical particles, recruiting the viral Env proteins, and packaging the genomic RNA via direct interactions with the RNA packaging sequence (Psi). Gag-Pol polyprotein may regulate its own translation, by the binding genomic RNA in the 5'-UTR. At low concentration, the polyprotein would promote translation, whereas at high concentration, the polyprotein would encapsidate genomic RNA and then shut off translation. Its function is as follows. Targets the polyprotein to the plasma membrane via a multipartite membrane-binding signal, that includes its myristoylated N-terminus. Matrix protein is part of the pre-integration complex. Implicated in the release from host cell mediated by Vpu. Binds to RNA. In terms of biological role, forms the conical core that encapsulates the genomic RNA-nucleocapsid complex in the virion. Most core are conical, with only 7% tubular. The core is constituted by capsid protein hexamer subunits. The core is disassembled soon after virion entry. Host restriction factors such as TRIM5-alpha or TRIMCyp bind retroviral capsids and cause premature capsid disassembly, leading to blocks in reverse transcription. Capsid restriction by TRIM5 is one of the factors which restricts HIV-1 to the human species. Host PIN1 apparently facilitates the virion uncoating. On the other hand, interactions with PDZD8 or CYPA stabilize the capsid. Functionally, encapsulates and protects viral dimeric unspliced genomic RNA (gRNA). Binds these RNAs through its zinc fingers. Acts as a nucleic acid chaperone which is involved in rearangement of nucleic acid secondary structure during gRNA retrotranscription. Also facilitates template switch leading to recombination. As part of the polyprotein, participates in gRNA dimerization, packaging, tRNA incorporation and virion assembly. Aspartyl protease that mediates proteolytic cleavages of Gag and Gag-Pol polyproteins during or shortly after the release of the virion from the plasma membrane. Cleavages take place as an ordered, step-wise cascade to yield mature proteins. This process is called maturation. Displays maximal activity during the budding process just prior to particle release from the cell. Also cleaves Nef and Vif, probably concomitantly with viral structural proteins on maturation of virus particles. Hydrolyzes host EIF4GI and PABP1 in order to shut off the capped cellular mRNA translation. The resulting inhibition of cellular protein synthesis serves to ensure maximal viral gene expression and to evade host immune response. Also mediates cleavage of host YTHDF3. Mediates cleavage of host CARD8, thereby activating the CARD8 inflammasome, leading to the clearance of latent HIV-1 in patient CD4(+) T-cells after viral reactivation; in contrast, HIV-1 can evade CARD8-sensing when its protease remains inactive in infected cells prior to viral budding. Its function is as follows. Multifunctional enzyme that converts the viral RNA genome into dsDNA in the cytoplasm, shortly after virus entry into the cell. This enzyme displays a DNA polymerase activity that can copy either DNA or RNA templates, and a ribonuclease H (RNase H) activity that cleaves the RNA strand of RNA-DNA heteroduplexes in a partially processive 3' to 5' endonucleasic mode. Conversion of viral genomic RNA into dsDNA requires many steps. A tRNA(3)-Lys binds to the primer-binding site (PBS) situated at the 5'-end of the viral RNA. RT uses the 3' end of the tRNA primer to perform a short round of RNA-dependent minus-strand DNA synthesis. The reading proceeds through the U5 region and ends after the repeated (R) region which is present at both ends of viral RNA. The portion of the RNA-DNA heteroduplex is digested by the RNase H, resulting in a ssDNA product attached to the tRNA primer. This ssDNA/tRNA hybridizes with the identical R region situated at the 3' end of viral RNA. This template exchange, known as minus-strand DNA strong stop transfer, can be either intra- or intermolecular. RT uses the 3' end of this newly synthesized short ssDNA to perform the RNA-dependent minus-strand DNA synthesis of the whole template. RNase H digests the RNA template except for two polypurine tracts (PPTs) situated at the 5'-end and near the center of the genome. It is not clear if both polymerase and RNase H activities are simultaneous. RNase H probably can proceed both in a polymerase-dependent (RNA cut into small fragments by the same RT performing DNA synthesis) and a polymerase-independent mode (cleavage of remaining RNA fragments by free RTs). Secondly, RT performs DNA-directed plus-strand DNA synthesis using the PPTs that have not been removed by RNase H as primers. PPTs and tRNA primers are then removed by RNase H. The 3' and 5' ssDNA PBS regions hybridize to form a circular dsDNA intermediate. Strand displacement synthesis by RT to the PBS and PPT ends produces a blunt ended, linear dsDNA copy of the viral genome that includes long terminal repeats (LTRs) at both ends. In terms of biological role, catalyzes viral DNA integration into the host chromosome, by performing a series of DNA cutting and joining reactions. This enzyme activity takes place after virion entry into a cell and reverse transcription of the RNA genome in dsDNA. The first step in the integration process is 3' processing. This step requires a complex comprising the viral genome, matrix protein, Vpr and integrase. This complex is called the pre-integration complex (PIC). The integrase protein removes 2 nucleotides from each 3' end of the viral DNA, leaving recessed CA OH's at the 3' ends. In the second step, the PIC enters cell nucleus. This process is mediated through integrase and Vpr proteins, and allows the virus to infect a non dividing cell. This ability to enter the nucleus is specific of lentiviruses, other retroviruses cannot and rely on cell division to access cell chromosomes. In the third step, termed strand transfer, the integrase protein joins the previously processed 3' ends to the 5' ends of strands of target cellular DNA at the site of integration. The 5'-ends are produced by integrase-catalyzed staggered cuts, 5 bp apart. A Y-shaped, gapped, recombination intermediate results, with the 5'-ends of the viral DNA strands and the 3' ends of target DNA strands remaining unjoined, flanking a gap of 5 bp. The last step is viral DNA integration into host chromosome. This involves host DNA repair synthesis in which the 5 bp gaps between the unjoined strands are filled in and then ligated. Since this process occurs at both cuts flanking the HIV genome, a 5 bp duplication of host DNA is produced at the ends of HIV-1 integration. Alternatively, Integrase may catalyze the excision of viral DNA just after strand transfer, this is termed disintegration. The polypeptide is Gag-Pol polyprotein (gag-pol) (Human immunodeficiency virus type 1 group M subtype J (isolate SE9280) (HIV-1)).